The sequence spans 61 residues: Large ribosomal subunit protein uL30 (61 aa).

This sequence belongs to the universal ribosomal protein uL30 family. In terms of assembly, part of the 50S ribosomal subunit.

The sequence is that of Large ribosomal subunit protein uL30 from Bifidobacterium adolescentis (strain ATCC 15703 / DSM 20083 / NCTC 11814 / E194a).